The chain runs to 171 residues: O-acetyl-ADP-ribose deacetylase 2 (171 aa).

In terms of domain architecture, Macro spans 1-171; it reads MNKITVIQGD…NYDLYLKLLN (171 aa). Residues 10–11, Asn-24, 32–34, and 121–125 contribute to the substrate site; these read DI, GVD, and STGIY. The active-site Proton acceptor is the Asp-34.

This sequence belongs to the MacroD-type family. YmdB subfamily. In terms of assembly, homodimer. Interacts with RNase III.

The catalysed reaction is 3''-O-acetyl-ADP-D-ribose + H2O = ADP-D-ribose + acetate + H(+). The enzyme catalyses 2''-O-acetyl-ADP-D-ribose + H2O = ADP-D-ribose + acetate + H(+). Functionally, deacetylates O-acetyl-ADP ribose to yield ADP-ribose and free acetate. Down-regulates ribonuclease 3 (RNase III) activity. Acts by interacting directly with the region of the ribonuclease that is required for dimerization/activation. This Pantoea vagans (strain C9-1) (Pantoea agglomerans (strain C9-1)) protein is O-acetyl-ADP-ribose deacetylase 2.